Here is a 247-residue protein sequence, read N- to C-terminus: Sugar fermentation stimulation protein homolog (247 aa).

Belongs to the SfsA family.

The chain is Sugar fermentation stimulation protein homolog from Methanococcoides burtonii (strain DSM 6242 / NBRC 107633 / OCM 468 / ACE-M).